The sequence spans 330 residues: Stomatin-1 (330 aa).

A compositionally biased stretch (polar residues) spans 1-19 (MQPSETVEMQEMAQPSGQQ). The disordered stretch occupies residues 1 to 27 (MQPSETVEMQEMAQPSGQQRDVEARVQ). A helical membrane pass occupies residues 42–62 (MFCIAMSYVLIFLTFPVSVFM).

It belongs to the band 7/mec-2 family.

It localises to the membrane. The chain is Stomatin-1 (sto-1) from Caenorhabditis elegans.